The following is a 485-amino-acid chain: NADH-quinone oxidoreductase subunit N (485 aa).

The next 14 membrane-spanning stretches (helical) occupy residues 8–28, 35–55, 71–91, 105–125, 127–147, 159–179, 203–223, 235–255, 271–291, 297–317, 326–346, 373–393, 408–430, and 455–475; these read LIAL…MLSI, FLNA…LWFV, GFAM…CTFA, FYLL…ANHL, ALFL…GYAF, YTIL…LVYA, LLAG…LVPF, PAPV…GVVM, IVLG…ALSQ, LLGY…IALQ, VGVY…VVSL, AAVM…LGFI, WWLV…RVAV, and IVVL…QPLI.

The protein belongs to the complex I subunit 2 family. NDH-1 is composed of 13 different subunits. Subunits NuoA, H, J, K, L, M, N constitute the membrane sector of the complex.

The protein localises to the cell inner membrane. It carries out the reaction a quinone + NADH + 5 H(+)(in) = a quinol + NAD(+) + 4 H(+)(out). NDH-1 shuttles electrons from NADH, via FMN and iron-sulfur (Fe-S) centers, to quinones in the respiratory chain. The immediate electron acceptor for the enzyme in this species is believed to be ubiquinone. Couples the redox reaction to proton translocation (for every two electrons transferred, four hydrogen ions are translocated across the cytoplasmic membrane), and thus conserves the redox energy in a proton gradient. In Citrobacter koseri (strain ATCC BAA-895 / CDC 4225-83 / SGSC4696), this protein is NADH-quinone oxidoreductase subunit N.